Consider the following 389-residue polypeptide: Phospho-N-acetylmuramoyl-pentapeptide-transferase (389 aa).

10 helical membrane-spanning segments follow: residues 25 to 45, 73 to 93, 97 to 117, 135 to 155, 190 to 210, 222 to 242, 258 to 278, 286 to 306, 311 to 331, and 366 to 386; these read RAVM…PWVI, TMGG…WGDL, FIWI…VDDY, FWQS…VSEA, ISYP…IVGA, GLVI…AYVM, GAGE…AFLW, VFMG…VAVI, IVLF…MLQV, and QVVV…LSTL.

It belongs to the glycosyltransferase 4 family. MraY subfamily. Requires Mg(2+) as cofactor.

The protein resides in the cell inner membrane. The catalysed reaction is UDP-N-acetyl-alpha-D-muramoyl-L-alanyl-gamma-D-glutamyl-meso-2,6-diaminopimeloyl-D-alanyl-D-alanine + di-trans,octa-cis-undecaprenyl phosphate = di-trans,octa-cis-undecaprenyl diphospho-N-acetyl-alpha-D-muramoyl-L-alanyl-D-glutamyl-meso-2,6-diaminopimeloyl-D-alanyl-D-alanine + UMP. It participates in cell wall biogenesis; peptidoglycan biosynthesis. Its function is as follows. Catalyzes the initial step of the lipid cycle reactions in the biosynthesis of the cell wall peptidoglycan: transfers peptidoglycan precursor phospho-MurNAc-pentapeptide from UDP-MurNAc-pentapeptide onto the lipid carrier undecaprenyl phosphate, yielding undecaprenyl-pyrophosphoryl-MurNAc-pentapeptide, known as lipid I. In Burkholderia multivorans (strain ATCC 17616 / 249), this protein is Phospho-N-acetylmuramoyl-pentapeptide-transferase.